A 509-amino-acid chain; its full sequence is Maturase K (509 aa).

Belongs to the intron maturase 2 family. MatK subfamily.

The protein localises to the plastid. It is found in the chloroplast. Functionally, usually encoded in the trnK tRNA gene intron. Probably assists in splicing its own and other chloroplast group II introns. The sequence is that of Maturase K from Nicotiana acuminata (Acuminate tobacco).